Here is a 117-residue protein sequence, read N- to C-terminus: Nascent polypeptide-associated complex protein (117 aa).

The region spanning 9-77 (PKQLKQMQRA…ARECDLEAEV (69 aa)) is the NAC-A/B domain.

The protein belongs to the NAC-alpha family. In terms of assembly, homodimer. Interacts with the ribosome. Binds ribosomal RNA.

In terms of biological role, contacts the emerging nascent chain on the ribosome. This Methanothermobacter marburgensis (strain ATCC BAA-927 / DSM 2133 / JCM 14651 / NBRC 100331 / OCM 82 / Marburg) (Methanobacterium thermoautotrophicum) protein is Nascent polypeptide-associated complex protein.